Reading from the N-terminus, the 2276-residue chain is Poly [ADP-ribose] polymerase tankyrase (2276 aa).

2 stretches are compositionally biased toward basic residues: residues 1–15 (MARRVNKKKSPVKAA) and 87–98 (KAVKAPKVKAPS). Disordered regions lie at residues 1–20 (MARRVNKKKSPVKAARKIDG) and 79–103 (SSKTGQKVKAVKAPKVKAPSKKGND). ANK repeat units follow at residues 345-374 (KNITPLHTAAISNSTHMLEAMRAVYPTINI), 378-407 (DNWYTMHYAACAPGTAPMEFLLKNGGSVTM), 411-440 (QTETPLHVAARAGRAVNCTFLMKEMLDLEK), 461-490 (SGNSALHLAVLRNNLDVVDALLAEPTIVVD), 498-527 (NRLTPLMMACGKGYLEMAKKLVEKGALVEG), 531-560 (KKRTPLIHAMLNGQIHTAAFLLAKGASLTL), 564-593 (SGNTAAHYAAAYGFLDCLKLLASIDDNILS), 598-627 (WQLYPLSVAYLKGHYGIVTWLLEGPHKDKA), 675-725 (SGQT…KVDV), 729-758 (EDNTPLHYALTNGNLMLFNLMLDKVANKRN), 970-999 (KDDVLIVQAIMFDKPNVVELILDTASEMHL), 1171-1200 (NGNTILHLAAIKNSTICLMTLIRKKCHVDL), 1204-1233 (DGNTPLALAVHHGRQSSALTLIQANADVTE), 1472-1501 (GLIPPISFAVLQENPNMIRALRNAGASLKT), and 1505-1535 (YGRTPLMYAIMTNNRSVVDAIVGDGKLAVVL). The segment at 1570–1649 (VPARVESDEE…STGPKRKKLV (80 aa)) is disordered. Composition is skewed to acidic residues over residues 1576 to 1590 (SDEEEEDNSGSESGE) and 1612 to 1622 (SDDEDDDDDDS). The stretch at 1662–1706 (KENNPLHYFIEPLAWENVELLGDLAAANKTAIVQCLIDKRSPNPI) is one ANK 16 repeat. The region spanning 1788–1889 (GLVSFCDETQ…ANFRDMPKKY (102 aa)) is the WGR domain. The region spanning 1910-2045 (KNTEKDPIRR…EIETATRLLC (136 aa)) is the PARP alpha-helical domain. One can recognise a PARP catalytic domain in the interval 2047–2276 (AEFRQDLDRV…VLPKYIVMYK (230 aa)).

Expressed throughout the head and tail, in germ cells and somatic cells.

It localises to the nucleus. The protein resides in the chromosome. It carries out the reaction NAD(+) + (ADP-D-ribosyl)n-acceptor = nicotinamide + (ADP-D-ribosyl)n+1-acceptor + H(+).. The catalysed reaction is L-aspartyl-[protein] + NAD(+) = 4-O-(ADP-D-ribosyl)-L-aspartyl-[protein] + nicotinamide. The enzyme catalyses L-glutamyl-[protein] + NAD(+) = 5-O-(ADP-D-ribosyl)-L-glutamyl-[protein] + nicotinamide. In terms of biological role, poly[ADP-ribose] polymerases modify various nuclear proteins by poly(ADP-ribosyl)ation, a post-translational modification synthesized after DNA damage that appears as an obligatory step in a detection/signaling pathway leading to the reparation of DNA strand breaks and programmed cell death. The polypeptide is Poly [ADP-ribose] polymerase tankyrase (Caenorhabditis elegans).